The following is a 445-amino-acid chain: MAMSELGIQKTSDGTVSRLLNVVESELQAGREKGDPTEKQLQIILEDAPLWQRFKEVTNEMIVTKNGRRMFPVLKISVSGLDPNAMYSLLLDFVPTDSHRWKYVNGEWVPAGKPEVSSHSCVYIHPDSPNFGAHWMKAPISFSKVKLTNKLNGGGQIMLNSLHKYEPQVHIVRVGGAHRMVMNCSFPETQFIAVTAYQNEEITALKIKYNPFAKAFLDAKERNHLKDIPEAVSESQHVAYSHLGGWIFSNPDGVCAAGNANYQYATPLPLSAPHTHHGCEPYPGLRGHRQAPYPSAYMHRNHSPSVNLIESSSNNLQVFSGPDSWTSLSSTPHTSILSVPHTSGPINPGPSPYPCLWTISNSGGGPAGPGPDVHASSPGAFLLGGPAVTSPLSAQAPTSAGVEVLGEPSLTSIAVSTWTAVASHPFSGWGGPGGGGHHSPSSLDS.

A DNA-binding region (T-box) is located at residues 45–218 (LEDAPLWQRF…YNPFAKAFLD (174 aa)).

The protein resides in the nucleus. In terms of biological role, transcriptional regulator involved in developmental processes. Can activate POMC gene expression and repress the alpha glycoprotein subunit and thyroid-stimulating hormone beta promoters. The protein is T-box transcription factor TBX19 of Canis lupus familiaris (Dog).